Reading from the N-terminus, the 38-residue chain is Photosystem II reaction center protein L (38 aa).

A helical membrane pass occupies residues 17–37; that stretch reads SLYWGLLLIFVLAVLFSNYSF.

Belongs to the PsbL family. PSII is composed of 1 copy each of membrane proteins PsbA, PsbB, PsbC, PsbD, PsbE, PsbF, PsbH, PsbI, PsbJ, PsbK, PsbL, PsbM, PsbT, PsbX, PsbY, PsbZ, Psb30/Ycf12, at least 3 peripheral proteins of the oxygen-evolving complex and a large number of cofactors. It forms dimeric complexes.

Its subcellular location is the plastid. The protein resides in the chloroplast thylakoid membrane. In terms of biological role, one of the components of the core complex of photosystem II (PSII). PSII is a light-driven water:plastoquinone oxidoreductase that uses light energy to abstract electrons from H(2)O, generating O(2) and a proton gradient subsequently used for ATP formation. It consists of a core antenna complex that captures photons, and an electron transfer chain that converts photonic excitation into a charge separation. This subunit is found at the monomer-monomer interface and is required for correct PSII assembly and/or dimerization. The chain is Photosystem II reaction center protein L from Bowenia serrulata (Byfield fern).